A 315-amino-acid polypeptide reads, in one-letter code: MLEIEKPKIECVEMDPEGTYGKFVVDPLERGYGITLGNSLRRVLLASLPGAAVTAVKIDGVLHEFSSIPGVREDVTELILNLKSLRLKLYGEEDRLMRIEAEGEGRITAGDIITSPDVEILNPDLHIATLEPDARLYMELTVGRGRGYVPAEKNKRGNHVIGVIPVDSIFTPVTKVNFTVDKTRVGHDTDFDKLTMEVWTDGSLRPDEALSLAARITTEHLRLFVGLTESVNNVEIMVTKEEEKKNKLLEMPIEELDLSVRSYNCLKRAGINTVEELIQRNEEEMMKVRNLGKKSLEEVVRKLGELGLDLRHDEE.

The segment at 1-228 (MLEIEKPKIE…EHLRLFVGLT (228 aa)) is alpha N-terminal domain (alpha-NTD). An alpha C-terminal domain (alpha-CTD) region spans residues 245 to 315 (KNKLLEMPIE…LGLDLRHDEE (71 aa)).

Belongs to the RNA polymerase alpha chain family. In terms of assembly, homodimer. The RNAP catalytic core consists of 2 alpha, 1 beta, 1 beta' and 1 omega subunit. When a sigma factor is associated with the core the holoenzyme is formed, which can initiate transcription.

It carries out the reaction RNA(n) + a ribonucleoside 5'-triphosphate = RNA(n+1) + diphosphate. DNA-dependent RNA polymerase catalyzes the transcription of DNA into RNA using the four ribonucleoside triphosphates as substrates. The sequence is that of DNA-directed RNA polymerase subunit alpha from Desulforudis audaxviator (strain MP104C).